We begin with the raw amino-acid sequence, 148 residues long: D-aminoacyl-tRNA deacylase (148 aa).

Positions 136 to 137 match the Gly-cisPro motif, important for rejection of L-amino acids motif; that stretch reads GP.

It belongs to the DTD family. As to quaternary structure, homodimer.

It localises to the cytoplasm. The enzyme catalyses glycyl-tRNA(Ala) + H2O = tRNA(Ala) + glycine + H(+). The catalysed reaction is a D-aminoacyl-tRNA + H2O = a tRNA + a D-alpha-amino acid + H(+). Its function is as follows. An aminoacyl-tRNA editing enzyme that deacylates mischarged D-aminoacyl-tRNAs. Also deacylates mischarged glycyl-tRNA(Ala), protecting cells against glycine mischarging by AlaRS. Acts via tRNA-based rather than protein-based catalysis; rejects L-amino acids rather than detecting D-amino acids in the active site. By recycling D-aminoacyl-tRNA to D-amino acids and free tRNA molecules, this enzyme counteracts the toxicity associated with the formation of D-aminoacyl-tRNA entities in vivo and helps enforce protein L-homochirality. The chain is D-aminoacyl-tRNA deacylase from Kosmotoga olearia (strain ATCC BAA-1733 / DSM 21960 / TBF 19.5.1).